A 408-amino-acid chain; its full sequence is Peptidase T (408 aa).

Histidine 78 is a Zn(2+) binding site. The active site involves aspartate 80. Aspartate 140 contacts Zn(2+). Glutamate 173 acts as the Proton acceptor in catalysis. Residues glutamate 174, aspartate 196, and histidine 379 each coordinate Zn(2+).

This sequence belongs to the peptidase M20B family. Zn(2+) is required as a cofactor.

The protein localises to the cytoplasm. It carries out the reaction Release of the N-terminal residue from a tripeptide.. Functionally, cleaves the N-terminal amino acid of tripeptides. The chain is Peptidase T from Shigella flexneri serotype 5b (strain 8401).